Reading from the N-terminus, the 254-residue chain is NH(3)-dependent NAD(+) synthetase (254 aa).

32 to 39 lines the ATP pocket; it reads GISGGIDS. D38 contacts Mg(2+). R113 provides a ligand contact to deamido-NAD(+). ATP is bound at residue T133. E138 contributes to the Mg(2+) binding site. Deamido-NAD(+) contacts are provided by K146 and D153. Residues K162 and T184 each contribute to the ATP site. Residue 244–245 participates in deamido-NAD(+) binding; sequence HK.

It belongs to the NAD synthetase family. In terms of assembly, homodimer.

It carries out the reaction deamido-NAD(+) + NH4(+) + ATP = AMP + diphosphate + NAD(+) + H(+). The protein operates within cofactor biosynthesis; NAD(+) biosynthesis; NAD(+) from deamido-NAD(+) (ammonia route): step 1/1. Catalyzes the ATP-dependent amidation of deamido-NAD to form NAD. Uses ammonia as a nitrogen source. The sequence is that of NH(3)-dependent NAD(+) synthetase from Thermococcus kodakarensis (strain ATCC BAA-918 / JCM 12380 / KOD1) (Pyrococcus kodakaraensis (strain KOD1)).